A 58-amino-acid polypeptide reads, in one-letter code: Ribosome modulation factor (58 aa).

The tract at residues 1–28 (MKRQKRDRFERAHTQGFKAGLHGRSKDN) is disordered.

The protein belongs to the ribosome modulation factor family.

It localises to the cytoplasm. Its function is as follows. During stationary phase, converts 70S ribosomes to an inactive dimeric form (100S ribosomes). The protein is Ribosome modulation factor of Idiomarina loihiensis (strain ATCC BAA-735 / DSM 15497 / L2-TR).